The sequence spans 859 residues: Probable helicase A859L (859 aa).

One can recognise a Helicase ATP-binding domain in the interval 178–349; sequence YQELRRSGRA…KNRELFGGVA (172 aa). ATP is bound at residue 191–198; sequence MACRCGKT. The short motif at 298 to 301 is the DEAH box element; the sequence is DECH. In terms of domain architecture, Helicase C-terminal spans 394 to 553; the sequence is QIIMALAYLK…RFYEHLLNPS (160 aa).

This sequence belongs to the asfivirus helicase A859L family.

This is Probable helicase A859L from Ornithodoros (relapsing fever ticks).